Reading from the N-terminus, the 1180-residue chain is Neurexin like receptor 1 (1180 aa).

An N-terminal signal peptide occupies residues 1–20 (MSGLCLVLLLSIFAVSQSSG). The Extracellular segment spans residues 21 to 1108 (ECSDVSFSSV…SQNKQDLVSK (1088 aa)). One can recognise a Laminin G-like 1 domain in the interval 124 to 290 (PITAFDDSSY…LSPNEVHNQC (167 aa)). The N-linked (GlcNAc...) asparagine glycan is linked to asparagine 229. A disulfide bond links cysteine 267 and cysteine 290. Residues asparagine 302, asparagine 336, asparagine 355, and asparagine 436 are each glycosylated (N-linked (GlcNAc...) asparagine). The EGF-like 1 domain occupies 444-481 (FQEKCLPNPCENGGGCVQSALDDYVCNCKEGYKGKNCH). 3 cysteine pairs are disulfide-bonded: cysteine 448–cysteine 459, cysteine 453–cysteine 469, and cysteine 471–cysteine 480. Residues asparagine 522 and asparagine 636 are each glycosylated (N-linked (GlcNAc...) asparagine). The Laminin G-like 2 domain occupies 695 to 863 (TFDPVTFSNR…GVAIGDDGYC (169 aa)). One can recognise an EGF-like 2 domain in the interval 859-896 (DDGYCRPDLCQNGGQCVDKYDGYVCDCSMTPFGGSDCT). Cystine bridges form between cysteine 863–cysteine 874, cysteine 868–cysteine 883, and cysteine 885–cysteine 895. Residues asparagine 933, asparagine 949, asparagine 978, asparagine 997, asparagine 1011, and asparagine 1052 are each glycosylated (N-linked (GlcNAc...) asparagine). A helical transmembrane segment spans residues 1109–1129 (AIIGGGILALSLFILCMSSLI). Residues 1130–1180 (CYMRSRPEGVYKTNETGENCSPSRSEEPLVHNTTSNNNNNPTYASNKEYFC) are Cytoplasmic-facing. Residues 1142–1152 (TNETGENCSPS) show a composition bias toward polar residues. Positions 1142–1180 (TNETGENCSPSRSEEPLVHNTTSNNNNNPTYASNKEYFC) are disordered. The segment covering 1161 to 1171 (NTTSNNNNNPT) has biased composition (low complexity).

It belongs to the neurexin family. As to quaternary structure, interacts (via the intracellular domain) with F-actin; the interaction is required for anchoring F-actin at the membrane for gap junction formation. Highly expressed in pharyngeal g1 and g2 gland cells, pharyngeal muscle cells and the unilateral GABAergic RIS interneuron (at protein level). Expressed in pm5 pharyngeal muscle cells and the nerve ring.

Its subcellular location is the cell membrane. The protein resides in the cell junction. It is found in the gap junction. Functionally, required for gap junction formation, playing a role in anchoring the cytoskeletal component F-actin to the membrane of adjacent cells and thus facilitating the formation of gap junction channels in embryonic cells, muscle cells and neuronal cells. Plays a role in maintaining gap junction activity to promote pharyngeal muscle contraction. The protein is Neurexin like receptor 1 of Caenorhabditis elegans.